The sequence spans 626 residues: SHC-transforming protein 4 (626 aa).

The interval M1–L185 is CH2. 2 disordered regions span residues I38 to S76 and L119 to L182. Residues Q120–R139 are compositionally biased toward polar residues. In terms of domain architecture, PID spans L186–D369. The CH1 stretch occupies residues H370 to E521. At Y422 the chain carries Phosphotyrosine. Positions C522 to I613 constitute an SH2 domain.

Interacts (via PID domain) with phosphorylated MUSK (via NPXY motif); undergoes tyrosine phosphorylation downstream of activated MUSK. Interacts with GRB2; the interaction is dependent of Tyr-422 phosphorylation and increased by EGF. Phosphorylated; the phosphorylation is enhanced by EGF. Phosphorylation at Tyr-422 is required for the interaction with GRB2. In terms of tissue distribution, expressed in both brain and skeletal muscle; widely expressed in brain namely olfactory bulb, cortex, hippocampus, striatum, thalamus, and brain stem (at protein level). Only expressed in melanomas. Weakly expressed in normal melanocytes and benign nevi. Highly expressed at the transition from radial growth phase to vertical growth phase and metastatic melanomas, when tumor cells acquire migratory competence and invasive potential.

It is found in the postsynaptic cell membrane. Activates both Ras-dependent and Ras-independent migratory pathways in melanomas. Contributes to the early phases of agrin-induced tyrosine phosphorylation of CHRNB1. The polypeptide is SHC-transforming protein 4 (Shc4) (Mus musculus (Mouse)).